Here is a 67-residue protein sequence, read N- to C-terminus: Probable pilin MJ1400 (67 aa).

A propeptide spanning residues Met-1–Gly-13 is cleaved from the precursor. Positions Gln-14–Leu-22 match the QXSXEXXXL motif.

In terms of processing, the N-terminus is cleaved by the prepilin peptidase EppA, which recognizes the class III signal sequence.

The protein resides in the secreted. The protein localises to the cell surface. It is found in the fimbrium. This is Probable pilin MJ1400 from Methanocaldococcus jannaschii (strain ATCC 43067 / DSM 2661 / JAL-1 / JCM 10045 / NBRC 100440) (Methanococcus jannaschii).